The chain runs to 298 residues: Lipoyl synthase (298 aa).

[4Fe-4S] cluster-binding residues include cysteine 40, cysteine 45, cysteine 51, cysteine 67, cysteine 71, cysteine 74, and serine 280. One can recognise a Radical SAM core domain in the interval 53-269 (AVRRTATFMI…KEIAMQKGFS (217 aa)).

This sequence belongs to the radical SAM superfamily. Lipoyl synthase family. [4Fe-4S] cluster serves as cofactor.

The protein resides in the cytoplasm. The enzyme catalyses [[Fe-S] cluster scaffold protein carrying a second [4Fe-4S](2+) cluster] + N(6)-octanoyl-L-lysyl-[protein] + 2 oxidized [2Fe-2S]-[ferredoxin] + 2 S-adenosyl-L-methionine + 4 H(+) = [[Fe-S] cluster scaffold protein] + N(6)-[(R)-dihydrolipoyl]-L-lysyl-[protein] + 4 Fe(3+) + 2 hydrogen sulfide + 2 5'-deoxyadenosine + 2 L-methionine + 2 reduced [2Fe-2S]-[ferredoxin]. It participates in protein modification; protein lipoylation via endogenous pathway; protein N(6)-(lipoyl)lysine from octanoyl-[acyl-carrier-protein]. Catalyzes the radical-mediated insertion of two sulfur atoms into the C-6 and C-8 positions of the octanoyl moiety bound to the lipoyl domains of lipoate-dependent enzymes, thereby converting the octanoylated domains into lipoylated derivatives. This Bacillus velezensis (strain DSM 23117 / BGSC 10A6 / LMG 26770 / FZB42) (Bacillus amyloliquefaciens subsp. plantarum) protein is Lipoyl synthase.